A 287-amino-acid polypeptide reads, in one-letter code: Glutamate racemase (287 aa).

Substrate contacts are provided by residues 32 to 33 (DS) and 64 to 65 (YG). The Proton donor/acceptor role is filled by C96. A substrate-binding site is contributed by 97–98 (NT). The active-site Proton donor/acceptor is the C208. 209 to 210 (TH) contacts substrate.

The protein belongs to the aspartate/glutamate racemases family.

The enzyme catalyses L-glutamate = D-glutamate. It participates in cell wall biogenesis; peptidoglycan biosynthesis. Provides the (R)-glutamate required for cell wall biosynthesis. The polypeptide is Glutamate racemase (Photorhabdus laumondii subsp. laumondii (strain DSM 15139 / CIP 105565 / TT01) (Photorhabdus luminescens subsp. laumondii)).